The sequence spans 72 residues: Translation initiation factor IF-1 (72 aa).

In terms of domain architecture, S1-like spans 1 to 72; it reads MAKEDVIEIE…TRGRITYRFK (72 aa).

Belongs to the IF-1 family. As to quaternary structure, component of the 30S ribosomal translation pre-initiation complex which assembles on the 30S ribosome in the order IF-2 and IF-3, IF-1 and N-formylmethionyl-tRNA(fMet); mRNA recruitment can occur at any time during PIC assembly.

The protein localises to the cytoplasm. One of the essential components for the initiation of protein synthesis. Stabilizes the binding of IF-2 and IF-3 on the 30S subunit to which N-formylmethionyl-tRNA(fMet) subsequently binds. Helps modulate mRNA selection, yielding the 30S pre-initiation complex (PIC). Upon addition of the 50S ribosomal subunit IF-1, IF-2 and IF-3 are released leaving the mature 70S translation initiation complex. This Streptococcus agalactiae serotype Ia (strain ATCC 27591 / A909 / CDC SS700) protein is Translation initiation factor IF-1.